Here is a 138-residue protein sequence, read N- to C-terminus: FLKIAEVGAGGNKLTLSMSVAVEFRDYLGDFIEHYAQLGPSQPPDLAQAQDEPRYYMDLKENQRGPGLGSTQGQTIALPAQGLIEFRLIDDYGVEEEPAELPEGTSLTVDNKRFFFDVGSNKVSEVKPTYRFGHTFCK.

Serine 70 carries the post-translational modification Phosphoserine.

This sequence belongs to the PUR DNA-binding protein family. Homodimer, heterodimer with PURB and heterotrimer with PURB and YBX1/Y-box protein 1. Interacts with FMR1; this interaction occurs in association with polyribosome.

It is found in the nucleus. In terms of biological role, this is a probable transcription activator that specifically binds the purine-rich single strand of the PUR element located upstream of the c-Myc gene. May play a role in the initiation of DNA replication and in recombination. The protein is Transcriptional activator protein Pur-alpha of Rattus norvegicus (Rat).